Here is a 140-residue protein sequence, read N- to C-terminus: Mialostatin (140 aa).

The N-terminal stretch at 1–18 (MAFFKSAVFLVCVVLAAA) is a signal peptide. 2 disulfides stabilise this stretch: Cys90–Cys103 and Cys114–Cys134.

Belongs to the cystatin family. Expressed in midgut (at protein level).

The protein localises to the secreted. In terms of biological role, inhibitor of cysteine proteinases. Inhibits several endogenous midgut digestive cysteine proteases, such as cathepsin L1, L3, B and C, but not aspartic protease cathepsin D1 and cysteine protease legumain. Inhibits proteolysis of blood proteins catalyzed by tick gut cysteine cathepsins. Inhibits host cathepsin B (CSTB), C (CTSC), H (CTSH), K (CTSK), L (CTSL) and S (CTSS). In Ixodes ricinus (Common tick), this protein is Mialostatin.